A 340-amino-acid polypeptide reads, in one-letter code: Uridine nucleosidase (340 aa).

Histidine 254 is an active-site residue.

The protein belongs to the IUNH family.

It is found in the cytoplasm. It localises to the nucleus. The enzyme catalyses uridine + H2O = D-ribose + uracil. Its function is as follows. Also acts on cytidine. The chain is Uridine nucleosidase (URH1) from Saccharomyces cerevisiae (strain ATCC 204508 / S288c) (Baker's yeast).